Here is a 100-residue protein sequence, read N- to C-terminus: Small ribosomal subunit protein uS14c (100 aa).

This sequence belongs to the universal ribosomal protein uS14 family. As to quaternary structure, part of the 30S ribosomal subunit.

It localises to the plastid. Its subcellular location is the chloroplast. Functionally, binds 16S rRNA, required for the assembly of 30S particles. The protein is Small ribosomal subunit protein uS14c of Chlorokybus atmophyticus (Soil alga).